Reading from the N-terminus, the 512-residue chain is MSEIREARLLKANSLVKKGFEPYAETFKITHSTKFLTEKFGYLENGQDFNLDVAIAGRVLAKRVMGKIAFYTIADQEGKIQLYLEKKILDDFEIHAKLLSFEDLKEIVDIGDWIGVYGTIKKTNKGELSIKVSKWEMLSKSLQPLPDKWHGLTDIEKRYRQRYLDLIVNPLSKNVFKTRAKCISLIRRWLDEKNFLEIETPILQSEAGGAEARPFITHHNTLDIPLYLRIATELHLKRMVVGGFEKVYELGRIFRNEGISTKHNPEFTSVEIYQAFSNYIDMMNLTEDLIRDIVLSCCDSLIINYQEKVIDFSKPWKRISMKDVVMEYTGIDFDSFNGDLNKAMKDLEESNIEISPKINTLGRLLNEVFEEKVESQLVEPTFVIDYPIEISPLARPHPENKEMVQRFELFIAGRELANAFSELIDPVDQRKRMQLQQSLRDAGDLEAHCIDEDFLQALEIGMPPTGGLGIGIDRLIMLLTNSPSIRDVITFPLLKPEITSTKSEKSTSNEVK.

The Mg(2+) site is built by Glu408 and Glu415.

The protein belongs to the class-II aminoacyl-tRNA synthetase family. In terms of assembly, homodimer. It depends on Mg(2+) as a cofactor.

It localises to the cytoplasm. It catalyses the reaction tRNA(Lys) + L-lysine + ATP = L-lysyl-tRNA(Lys) + AMP + diphosphate. The chain is Lysine--tRNA ligase from Prochlorococcus marinus subsp. pastoris (strain CCMP1986 / NIES-2087 / MED4).